The primary structure comprises 410 residues: Trifunctional NAD biosynthesis/regulator protein NadR (410 aa).

The HTH cro/C1-type domain maps to 7-62 (LKTAIKQQGCTLQQVADASGMTKGYLSQLLNAKIKSPSAQKLEALHRFLGLEFPRR). Residues 18–37 (LQQVADASGMTKGYLSQLLN) constitute a DNA-binding region (H-T-H motif). The nicotinamide mononucleotide adenylyltransferase stretch occupies residues 63–229 (QKNIGVVFGK…EYIPTEVKPF (167 aa)). NAD(+) contacts are provided by residues 70–73 (FGKF), His-77, Arg-104, 144–157 (EEGM…WDVW), 177–179 (TSE), 204–206 (MNI), 259–261 (SAW), and 294–297 (YIDF). Residues 230–410 (FVRTVAILGG…LVKEMMGEQG (181 aa)) form a ribosylnicotinamide kinase region.

In the central section; belongs to the bacterial NMN adenylyltransferase family. It in the C-terminal section; belongs to the bacterial RNK family. In terms of assembly, homotetramer.

The protein localises to the cell membrane. Its subcellular location is the cytoplasm. The enzyme catalyses beta-nicotinamide D-ribonucleotide + ATP + H(+) = diphosphate + NAD(+). It carries out the reaction beta-nicotinamide D-riboside + ATP = beta-nicotinamide D-ribonucleotide + ADP + H(+). Its pathway is cofactor biosynthesis; NAD(+) biosynthesis [regulation]. It participates in cofactor biosynthesis; NAD(+) biosynthesis; NAD(+) from nicotinamide D-ribonucleotide: step 1/1. With respect to regulation, feed-back regulated by NAD. A high level of NAD causes NadR to lose enzymatic activity and repress several NAD synthetic genes; conversely, a low NAD level activates the assimilatory enzymatic activities and leads to derepression of biosynthetic genes. In terms of biological role, this enzyme has three activities: DNA binding, nicotinamide mononucleotide (NMN) adenylyltransferase and ribosylnicotinamide (RN) kinase. The DNA-binding domain binds to the nadB operator sequence in an NAD- and ATP-dependent manner. As NAD levels increase within the cell, the affinity of NadR for the nadB operator regions of nadA, nadB, and pncB increases, repressing the transcription of these genes. The RN kinase activity catalyzes the phosphorylation of RN to form nicotinamide ribonucleotide. The NMN adenylyltransferase activity catalyzes the transfer of the AMP moiety of ATP to nicotinamide ribonucleotide to form NAD(+). The NMN adenylyltransferase domain also functions as the NAD and ATP sensor. The protein is Trifunctional NAD biosynthesis/regulator protein NadR (nadR) of Salmonella typhimurium (strain LT2 / SGSC1412 / ATCC 700720).